Consider the following 1018-residue polypeptide: DNA polymerase gamma (1018 aa).

This sequence belongs to the DNA polymerase type-A family. Mg(2+) serves as cofactor.

The protein localises to the mitochondrion. It catalyses the reaction DNA(n) + a 2'-deoxyribonucleoside 5'-triphosphate = DNA(n+1) + diphosphate. Functionally, involved in the replication of mitochondrial DNA. This Schizosaccharomyces pombe (strain 972 / ATCC 24843) (Fission yeast) protein is DNA polymerase gamma (mip1).